The primary structure comprises 190 residues: 6,7-dimethyl-8-ribityllumazine synthase (190 aa).

Residues phenylalanine 23, 61 to 63 (SFE), and 85 to 87 (AVI) each bind 5-amino-6-(D-ribitylamino)uracil. 90-91 (QT) serves as a coordination point for (2S)-2-hydroxy-3-oxobutyl phosphate. Histidine 93 serves as the catalytic Proton donor. Position 118 (phenylalanine 118) interacts with 5-amino-6-(D-ribitylamino)uracil. Arginine 132 is a binding site for (2S)-2-hydroxy-3-oxobutyl phosphate.

This sequence belongs to the DMRL synthase family.

The catalysed reaction is (2S)-2-hydroxy-3-oxobutyl phosphate + 5-amino-6-(D-ribitylamino)uracil = 6,7-dimethyl-8-(1-D-ribityl)lumazine + phosphate + 2 H2O + H(+). It participates in cofactor biosynthesis; riboflavin biosynthesis; riboflavin from 2-hydroxy-3-oxobutyl phosphate and 5-amino-6-(D-ribitylamino)uracil: step 1/2. In terms of biological role, catalyzes the formation of 6,7-dimethyl-8-ribityllumazine by condensation of 5-amino-6-(D-ribitylamino)uracil with 3,4-dihydroxy-2-butanone 4-phosphate. This is the penultimate step in the biosynthesis of riboflavin. This chain is 6,7-dimethyl-8-ribityllumazine synthase, found in Nostoc sp. (strain PCC 7120 / SAG 25.82 / UTEX 2576).